Reading from the N-terminus, the 96-residue chain is 2Fe-2S ferredoxin-5 (96 aa).

The region spanning 2–96 is the 2Fe-2S ferredoxin-type domain; the sequence is PKVIVANINA…GKGDVVIYLP (95 aa). 4 residues coordinate [2Fe-2S] cluster: Cys36, Cys42, Cys45, and Cys81.

It belongs to the adrenodoxin/putidaredoxin family. Requires [2Fe-2S] cluster as cofactor.

Functionally, may be involved in the assembly of iron-sulfur clusters (Isc-Fd). This Aquifex aeolicus (strain VF5) protein is 2Fe-2S ferredoxin-5 (fdx5).